A 290-amino-acid chain; its full sequence is Nucleotide-binding protein XfasM23_0667 (290 aa).

Position 13-20 (13-20 (GLSGSGKS)) interacts with ATP. 65–68 (DIRS) is a GTP binding site.

It belongs to the RapZ-like family.

In terms of biological role, displays ATPase and GTPase activities. The chain is Nucleotide-binding protein XfasM23_0667 from Xylella fastidiosa (strain M23).